The chain runs to 2055 residues: Protein PHOTOPERIOD-INDEPENDENT EARLY FLOWERING 1 (2055 aa).

Residues 1–47 form a disordered region; that stretch reads MASKGGKSKPDIVMASKSGKSKPDNESRAKRQKTLEAPKEPRRPKTH. The segment covering 21–47 has biased composition (basic and acidic residues); that stretch reads SKPDNESRAKRQKTLEAPKEPRRPKTH. The Nuclear localization signal 1 signature appears at 29-36; sequence AKRQKTLE. In terms of domain architecture, HSA spans 35 to 107; that stretch reads LEAPKEPRRP…EEQRLRKVAL (73 aa). Coiled coils occupy residues 78–147 and 229–250; these read LRAS…LEFL and EEDE…LQNE. 2 disordered regions span residues 183–332 and 340–359; these read KSDE…SNDS and ETHS…KSRK. Over residues 208–230 the composition is skewed to acidic residues; the sequence is ELDEDYDLKSEDETEDDEDTIEE. 2 stretches are compositionally biased toward basic and acidic residues: residues 231–243 and 267–276; these read DEKH…RQEE and VSRETSPVKD. Residues 392–416 adopt a coiled-coil conformation; that stretch reads EEELAKADNEDHVEEIALLQKESEM. A disordered region spans residues 432–461; that stretch reads KDISEDESESSFAVSEDSIVDSDENRQQAD. The 166-residue stretch at 548–713 folds into the Helicase ATP-binding domain; that stretch reads VTMYEKKLNG…WSLMHFLMPH (166 aa). 561-568 contributes to the ATP binding site; sequence DEMGLGKT. The DEAH box signature appears at 664 to 667; it reads DEAH. In terms of domain architecture, Helicase C-terminal spans 1076 to 1229; sequence KLQELAMLLR…NLVIQNGEYN (154 aa). The disordered stretch occupies residues 1293–1313; it reads EEAVDNQEFTEEPVERPEDDE. Positions 1419–1492 form a coiled coil; it reads FEEKEWELDH…EREAAEVAEM (74 aa). 2 short sequence motifs (nuclear localization signal) span residues 1506–1513 and 1570–1577; these read KKKKKAKK and KKRDLIVD. The interval 1577 to 1597 is disordered; the sequence is DTDEEKTSKKKAKKHKKSLPN. Positions 1584-1594 are enriched in basic residues; it reads SKKKAKKHKKS. In terms of domain architecture, Myb-like spans 1673-1727; it reads SWLPQEDAILCAMVHEYGPNWNFVSGTLYGMTAGGAYRGRYRHPAYCCERYRELI. Disordered stretches follow at residues 1843-1864 and 1951-1977; these read ALQD…LQET and KSRT…STKS. Positions 1844–1864 are enriched in polar residues; it reads LQDSGPSQPDNTISRSRLQET. Residues 2006-2029 adopt a coiled-coil conformation; that stretch reads GDREEEEEQEVDEKANSAEIEMIS.

It belongs to the SNF2/RAD54 helicase family. SWR1 subfamily. As to quaternary structure, component of the SWR1 chromatin-remodeling complex composed of at least ARP6/ESD1/SUF3, PIE1, SWC6, SWC2 and H2AZs (HTA8, HTA9, HTA11). Interacts (via c-terminus) with SWC6 and ARP6 and (via N-terminus) with H2AZs. In terms of tissue distribution, expressed in ovules, but not in stamens.

The protein localises to the nucleus. It carries out the reaction ATP + H2O = ADP + phosphate + H(+). Its function is as follows. Component of the SWR1 complex which mediates the ATP-dependent exchange of histone H2A for the H2A variant H2A.F/Z leading to transcriptional regulation of selected genes (e.g. FLC) by chromatin remodeling. Probable DNA-dependent ATPase. Not involved in the repression of FLC in gametophytes, but required for the reactivation of FLC in early embryos and for the maintenance of full activation of FLC in late embryos. The polypeptide is Protein PHOTOPERIOD-INDEPENDENT EARLY FLOWERING 1 (PIE1) (Arabidopsis thaliana (Mouse-ear cress)).